The primary structure comprises 61 residues: Cytotoxin 2 (61 aa).

4 disulfide bridges follow: Cys3/Cys22, Cys15/Cys39, Cys43/Cys54, and Cys55/Cys60.

This sequence belongs to the three-finger toxin family. Short-chain subfamily. Type IB cytotoxin sub-subfamily. As to expression, expressed by the venom gland.

It localises to the secreted. This protein lyses red blood cells, has cytotoxic activity and induces hypotension, but is not neurotoxic. In addition, it induces direct paralysis of the muscle fiber. This chain is Cytotoxin 2, found in Hemachatus haemachatus (Rinkhals).